The primary structure comprises 307 residues: Reaction center protein M chain (307 aa).

The next 3 helical transmembrane spans lie at 52-78, 110-139, and 142-167; these read LGIA…WYQA, QGGV…ADQL, and GKHM…PILM. (7R,8Z)-bacteriochlorophyll b contacts are provided by histidine 181 and histidine 201. The helical transmembrane segment at 197–225 threads the bilayer; that stretch reads YNPFHGLSIAALYGSALLFAMHGATILAV. Positions 218 and 233 each coordinate Fe cation. An a ubiquinone-binding site is contributed by tryptophan 251. A helical membrane pass occupies residues 259–285; sequence ATMEGIHRWAIWMAVMVTLTGGIGILL. Fe cation is bound at residue histidine 265.

It belongs to the reaction center PufL/M/PsbA/D family. As to quaternary structure, reaction center is composed of four bacteriochlorophylls, two bacteriopheophytins, two ubiquinones, one iron, and three highly hydrophobic polypeptide chains (designated L, M, and H).

It localises to the cellular chromatophore membrane. Its function is as follows. The reaction center is a membrane-bound complex that mediates the initial photochemical event in the electron transfer process of photosynthesis. This chain is Reaction center protein M chain (pufM), found in Rhodobacter capsulatus (Rhodopseudomonas capsulata).